Here is a 192-residue protein sequence, read N- to C-terminus: Inosine triphosphate pyrophosphatase (192 aa).

8-13 serves as a coordination point for ITP; it reads TTNLKK. Glu-34 is a Mg(2+) binding site. Residues Lys-46, 64-65, Lys-81, 141-144, Lys-164, and 169-170 each bind ITP; these read DT, EGFD, and HR.

Belongs to the HAM1 NTPase family. As to quaternary structure, homodimer. Mg(2+) serves as cofactor. The cofactor is Mn(2+).

It localises to the cytoplasm. The protein resides in the nucleus. The catalysed reaction is ITP + H2O = IMP + diphosphate + H(+). It catalyses the reaction dITP + H2O = dIMP + diphosphate + H(+). It carries out the reaction XTP + H2O = XMP + diphosphate + H(+). Functionally, pyrophosphatase that hydrolyzes non-canonical purine nucleotides such as inosine triphosphate (ITP), deoxyinosine triphosphate (dITP) or xanthosine 5'-triphosphate (XTP) to their respective monophosphate derivatives. The enzyme does not distinguish between the deoxy- and ribose forms. Probably excludes non-canonical purines from RNA and DNA precursor pools, thus preventing their incorporation into RNA and DNA and avoiding chromosomal lesions. The protein is Inosine triphosphate pyrophosphatase of Encephalitozoon cuniculi (strain GB-M1) (Microsporidian parasite).